We begin with the raw amino-acid sequence, 92 residues long: Large ribosomal subunit protein bL27 (92 aa).

A propeptide spanning residues 1 to 8 (MLMNLQFF) is cleaved from the precursor. Residues 11–30 (HKGGGSTANGRDSAGRRLGA) form a disordered region.

Belongs to the bacterial ribosomal protein bL27 family. The N-terminus is cleaved by ribosomal processing cysteine protease Prp.

This chain is Large ribosomal subunit protein bL27, found in Lactiplantibacillus plantarum (strain ATCC BAA-793 / NCIMB 8826 / WCFS1) (Lactobacillus plantarum).